The following is a 194-amino-acid chain: MPTPALTRYSMQNLSVDQYLRAHIRTVPDWPAPGVQFRDITPLLQDAKVFRVLIDAFIHRYMDPSIRPDVVAGLDARGFILGAVVAYELNVGFVPIRKKGKLPFTTVEETYELEYGSATVELHTDAVKPGDRVLLIDDLIATGGTMMAGMKLLEKLGAQVIEGAAIVDLPELGGSDKLRASGLALFTLLDFSGH.

This sequence belongs to the purine/pyrimidine phosphoribosyltransferase family. In terms of assembly, homodimer.

Its subcellular location is the cytoplasm. It carries out the reaction AMP + diphosphate = 5-phospho-alpha-D-ribose 1-diphosphate + adenine. Its pathway is purine metabolism; AMP biosynthesis via salvage pathway; AMP from adenine: step 1/1. Its function is as follows. Catalyzes a salvage reaction resulting in the formation of AMP, that is energically less costly than de novo synthesis. This is Adenine phosphoribosyltransferase from Albidiferax ferrireducens (strain ATCC BAA-621 / DSM 15236 / T118) (Rhodoferax ferrireducens).